The sequence spans 150 residues: Histone deacetylase complex subunit SAP18 (150 aa).

Belongs to the SAP18 family. In terms of assembly, forms a complex with SIN3 and histone deacetylase. Interacts with the N-terminal residues of TRL. Interacts with BCD; in vitro and yeast cells.

It localises to the nucleus. It is found in the cytoplasm. Involved in the tethering of the SIN3 complex to core histone proteins. Interacts with bicoid (bcd) to repress transcription of bicoid target genes in the anterior tip of the embryo; a process known as retraction. Interacts with Trl and binds to Polycomb response elements at the bithorax complex. May contribute to the regulation of other homeotic gene expressions. The chain is Histone deacetylase complex subunit SAP18 (Bin1) from Drosophila melanogaster (Fruit fly).